We begin with the raw amino-acid sequence, 91 residues long: Small ribosomal subunit protein bS16c (91 aa).

The protein belongs to the bacterial ribosomal protein bS16 family.

It is found in the plastid. The protein localises to the chloroplast. This Pelargonium hortorum (Common geranium) protein is Small ribosomal subunit protein bS16c.